A 715-amino-acid polypeptide reads, in one-letter code: MDLGIPEFTCDVSLEDGKKPQPLQFSFTLYDLDGHGKITKDDIAGIVSTIYESIGKSVVVPHYGSKTINVRLTVSPDGKTKQTASAVKKAAITPRRRYRPRKLISDDDGSDTSENCPRVMRTRANTVVANTTINNNVKHKDNNVAKDEDVVDGLTKSSEAVETTFHNNLNGKGKTLNVKNDNIYESINNLKCCNIQAAQASKPTVALSQSPGTLNNSTATTVICRDCSLEGCTIDETLPLGTVVIPATTPAAAISSRAKRKVVRKSRSSRKASKLTDDFSRPRARSLSVGNENCYENMIGTTQEECWKSSLCRRELIEIIRDSMVKNSLCFQPNRKPLENSPKHRHRSHTIAARIGAEHCGETVMATQQALVAAHETNLCGYDSYLHQTICAAANANHAALHLNGGVVGNGGVFTALPLTTSTPNRLLQHHSHHAHAKAKRKEHRLAVATRSQVHHQVAQPVKLSTAVLNQQYPNLSAEQKLSRSINQVEKWLDNRSPKLVNKLKLAEEIAEKSPRVAAAKLKRSKSKEEITHKSTKFENVLTTDLLLDNLKITEDIAELSVVTPKKIFNKECLISSATKKNIRTHHTTKTVSTTTAVVPPAVDKASKNLIQLQYASVPINAELSECENLIRISDAEEELHQSVQQQQGTHQQQQQPQSSVSSPTHHHHHHAGASLLGENSGSSASAASTTAVHRYVHEHIHHHYHHFENDPDES.

One can recognise an EF-hand domain in the interval 18-53 (KKPQPLQFSFTLYDLDGHGKITKDDIAGIVSTIYES). The disordered stretch occupies residues 256 to 282 (SRAKRKVVRKSRSSRKASKLTDDFSRP). A compositionally biased stretch (basic residues) spans 257 to 273 (RAKRKVVRKSRSSRKAS). Residues 305–334 (ECWKSSLCRRELIEIIRDSMVKNSLCFQPN) are required for nuclear localization and inhibition of Wnt signaling. The segment at 639-690 (ELHQSVQQQQGTHQQQQQPQSSVSSPTHHHHHHAGASLLGENSGSSASAAST) is disordered. 2 stretches are compositionally biased toward low complexity: residues 642–664 (QSVQQQQGTHQQQQQPQSSVSSP) and 673–690 (GASLLGENSGSSASAAST).

This sequence belongs to the NKD family.

Its subcellular location is the cell membrane. The protein resides in the cytoplasm. It localises to the nucleus. Cell autonomous antagonist of the canonical Wnt signaling pathway. May activate a second Wnt signaling pathway that controls planar cell polarity. Required for neuroblast specification. In Aedes aegypti (Yellowfever mosquito), this protein is Protein naked cuticle homolog.